Reading from the N-terminus, the 610-residue chain is UvrABC system protein C (610 aa).

In terms of domain architecture, GIY-YIG spans 16–94; it reads SQPGVYRMYD…IKLYQPRYNV (79 aa). The UVR domain maps to 204–239; it reads DQVLTQLIARMEKASQDLAFEEAARIRDQIQAVRRV.

This sequence belongs to the UvrC family. Interacts with UvrB in an incision complex.

It localises to the cytoplasm. Functionally, the UvrABC repair system catalyzes the recognition and processing of DNA lesions. UvrC both incises the 5' and 3' sides of the lesion. The N-terminal half is responsible for the 3' incision and the C-terminal half is responsible for the 5' incision. The protein is UvrABC system protein C of Salmonella gallinarum (strain 287/91 / NCTC 13346).